The following is a 123-amino-acid chain: Large ribosomal subunit protein bL12 (123 aa).

Belongs to the bacterial ribosomal protein bL12 family. Homodimer. Part of the ribosomal stalk of the 50S ribosomal subunit. Forms a multimeric L10(L12)X complex, where L10 forms an elongated spine to which 2 to 4 L12 dimers bind in a sequential fashion. Binds GTP-bound translation factors.

In terms of biological role, forms part of the ribosomal stalk which helps the ribosome interact with GTP-bound translation factors. Is thus essential for accurate translation. The polypeptide is Large ribosomal subunit protein bL12 (Zymomonas mobilis subsp. mobilis (strain ATCC 31821 / ZM4 / CP4)).